Reading from the N-terminus, the 472-residue chain is Mixed lineage kinase domain-like protein (472 aa).

The segment at 1–143 is N-terminal bundle and brace (NBB); mediates INSP6 binding; sequence MDKLGQIIKL…QEDRQDAEED (143 aa). The stretch at 61–81 forms a coiled coil; sequence LGRFDEVLKEANQQIEKFSKK. At Ser124 the chain carries Phosphoserine. The stretch at 138–229 forms a coiled coil; that stretch reads QDAEEDGNEN…VFNNPQAESV (92 aa). Residues 192 to 456 form the Protein kinase domain; it reads GPPWTKLKTS…DGRSLSGRER (265 aa). Residues 198–206 and Lys219 each bind ATP; that span reads LKTSKMSTI. Phosphoserine; by RIPK3 is present on residues Ser345 and Ser347. Thr349 is subject to Phosphothreonine; by RIPK3. Ser352 is modified (phosphoserine; by RIPK3).

The protein belongs to the protein kinase superfamily. As to quaternary structure, homooligomer. Homotrimer; forms homotrimers on necroptosis induction. Upon TNF-induced necrosis, forms in complex with PGAM5, RIPK1 and RIPK3. Within this complex, may play a role in the proper targeting of RIPK1-RIPK3 to its downstream effector PGAM5. Interacts with RIPK3; the interaction is direct and promotes its phosphorylation and subsequent activation. Phosphorylation by RIPK3 induces a conformational switch that is required for necroptosis. It also induces homotrimerization and localization to the plasma membrane. As to expression, highly expressed in thymus, colon, intestine, liver, spleen and lung. Expressed at much lower level in skeletal muscle, heart and kidney. Not detected in brain.

The protein localises to the cytoplasm. The protein resides in the cell membrane. It is found in the nucleus. With respect to regulation, activated via binding to highly phosphorylated inositol phosphates such as inositolhexakisphosphate (InsP6) which mediates the release of an N-terminal auto-inhibitory region. Activation requires not only RIPK3-dependent phosphorylation but also binding to highly phosphorylated inositol phosphates. Its function is as follows. Pseudokinase that plays a key role in TNF-induced necroptosis, a programmed cell death process. Does not have protein kinase activity. Activated following phosphorylation by RIPK3, leading to homotrimerization, localization to the plasma membrane and execution of programmed necrosis characterized by calcium influx and plasma membrane damage. In addition to TNF-induced necroptosis, necroptosis can also take place in the nucleus in response to orthomyxoviruses infection: following ZBP1 activation, which senses double-stranded Z-RNA structures, nuclear RIPK3 catalyzes phosphorylation and activation of MLKL, promoting disruption of the nuclear envelope and leakage of cellular DNA into the cytosol. Binds to highly phosphorylated inositol phosphates such as inositolhexakisphosphate (InsP6) which is essential for its necroptotic function. The polypeptide is Mixed lineage kinase domain-like protein (Mus musculus (Mouse)).